A 395-amino-acid chain; its full sequence is Renin (395 aa).

A signal peptide spans 1–21 (MLQSWEFVLLISCFLCFSSDA). Residues 22–43 (LQRISLKKMPSIRETLQEMGMK) constitute a propeptide, activation peptide. Residue N64 is glycosylated (N-linked (GlcNAc...) asparagine). In terms of domain architecture, Peptidase A1 spans 79-392 (YYGEISIGTP…DRQNNRIGFA (314 aa)). The active site involves D97. Disulfide bonds link C110-C117 and C274-C278. Residue D283 is part of the active site. A disulfide bridge links C316 with C351.

It belongs to the peptidase A1 family. Post-translationally, N-glycosylated. As to expression, expressed by the venom gland (at protein level).

The protein localises to the secreted. It catalyses the reaction Cleavage of Leu-|-Xaa bond in angiotensinogen to generate angiotensin I.. Its activity is regulated as follows. Inhibited completely by aspartyl protease inhibitor pepstatin A, but not by the serine- or metalloproteinase inhibitors PMSF or EDTA. Renin is a highly specific endopeptidase, whose only known function is to generate angiotensin I from angiotensinogen in the plasma, initiating a cascade of reactions that produce an elevation of blood pressure and increased sodium retention by the kidney. This protein is also found in snake venom and shown to specifically cleave human and porcine angiotensinogen into angiotensin I. It does not have general protease activity, no cleavage of alpha or beta casein. May be directly responsible for elevation of blood pressure in the victims of envenomation. The protein is Renin of Echis ocellatus (Ocellated saw-scaled viper).